A 117-amino-acid chain; its full sequence is MVQRLTYRRRLSYNTASNKTRLSRTPGNRIVYLYTKKTGKSPKSACGICPGRLRGIRAVRPQVLMRLSKTKKHVSRAYGGSMCAKCVRDRIKRAFLIEEQKIVVKVLKAQAQTQKSK.

It belongs to the eukaryotic ribosomal protein eL34 family. As to quaternary structure, component of the large ribosomal subunit.

The protein resides in the cytoplasm. Its subcellular location is the cytosol. The protein localises to the endoplasmic reticulum. In terms of biological role, component of the large ribosomal subunit. The ribosome is a large ribonucleoprotein complex responsible for the synthesis of proteins in the cell. The protein is Large ribosomal subunit protein eL34 (rpl34) of Danio rerio (Zebrafish).